A 146-amino-acid polypeptide reads, in one-letter code: Large ribosomal subunit protein uL13 (146 aa).

The protein belongs to the universal ribosomal protein uL13 family. As to quaternary structure, part of the 50S ribosomal subunit.

Functionally, this protein is one of the early assembly proteins of the 50S ribosomal subunit, although it is not seen to bind rRNA by itself. It is important during the early stages of 50S assembly. The polypeptide is Large ribosomal subunit protein uL13 (Bdellovibrio bacteriovorus (strain ATCC 15356 / DSM 50701 / NCIMB 9529 / HD100)).